The chain runs to 283 residues: Undecaprenyl-diphosphatase (283 aa).

7 consecutive transmembrane segments (helical) span residues Met1 to Ile21, Gly40 to Tyr60, Ser85 to Phe105, Tyr117 to Val137, Phe196 to Val216, Val232 to Leu252, and Tyr258 to Gly278.

Belongs to the UppP family.

It is found in the cell inner membrane. The enzyme catalyses di-trans,octa-cis-undecaprenyl diphosphate + H2O = di-trans,octa-cis-undecaprenyl phosphate + phosphate + H(+). In terms of biological role, catalyzes the dephosphorylation of undecaprenyl diphosphate (UPP). Confers resistance to bacitracin. This Chloroherpeton thalassium (strain ATCC 35110 / GB-78) protein is Undecaprenyl-diphosphatase.